We begin with the raw amino-acid sequence, 282 residues long: NADPH-dependent 7-cyano-7-deazaguanine reductase (282 aa).

Residue 88–90 participates in substrate binding; that stretch reads IES. 90–91 is an NADPH binding site; the sequence is SK. Catalysis depends on C190, which acts as the Thioimide intermediate. The Proton donor role is filled by D197. 229 to 230 lines the substrate pocket; it reads HE. Position 258-259 (258-259) interacts with NADPH; that stretch reads RG.

The protein belongs to the GTP cyclohydrolase I family. QueF type 2 subfamily. In terms of assembly, homodimer.

The protein resides in the cytoplasm. It carries out the reaction 7-aminomethyl-7-carbaguanine + 2 NADP(+) = 7-cyano-7-deazaguanine + 2 NADPH + 3 H(+). Its pathway is tRNA modification; tRNA-queuosine biosynthesis. Catalyzes the NADPH-dependent reduction of 7-cyano-7-deazaguanine (preQ0) to 7-aminomethyl-7-deazaguanine (preQ1). In Escherichia coli O17:K52:H18 (strain UMN026 / ExPEC), this protein is NADPH-dependent 7-cyano-7-deazaguanine reductase.